Consider the following 602-residue polypeptide: Chaperone protein DnaK (602 aa).

T199 carries the phosphothreonine; by autocatalysis modification.

It belongs to the heat shock protein 70 family.

Its function is as follows. Acts as a chaperone. The protein is Chaperone protein DnaK of Carsonella ruddii (strain PV).